The primary structure comprises 148 residues: Augurin (148 aa).

The first 31 residues, 1–31, serve as a signal peptide directing secretion; that stretch reads MGTSSARPAVLALAGLALLLLLCLGPGDVSG. 2 propeptides span residues 32-68 and 133-148; these read NKLKKMLQKREGPVPSKTNVAVSEHTAKEFLGGLKRA and SREGFRHGASVNYDDY.

Belongs to the augurin family. Expressed in the brain, with expression in the choroid plexus and the ventricular ependymal cells (at protein level).

It localises to the secreted. It is found in the cytoplasm. The protein resides in the apical cell membrane. Its function is as follows. Probable hormone that may attenuate cell proliferation and induce senescence of oligodendrocyte and neural precursor cells in the central nervous system. ECRG4-induced senescence is characterized by G1 arrest, RB1 dephosphorylation and accelerated CCND1 and CCND3 proteasomal degradation. This chain is Augurin, found in Rattus norvegicus (Rat).